A 292-amino-acid chain; its full sequence is Claudin-23 (292 aa).

Residues 1–3 (MRT) are Cytoplasmic-facing. Residues 4–24 (PVVMTLGMVLAPCGLLLNLTG) form a helical membrane-spanning segment. Topologically, residues 25-81 (TLAPGWRLVKGFLNQPVDVELYQGLWDMCREQSSRERECGQTDQWGYFEAQPVLVAR) are extracellular. Residues 82-102 (ALMVTSLAATVLGLLLASLGV) traverse the membrane as a helical segment. Residues 103–110 (RCWQDEPN) are Cytoplasmic-facing. Residues 111–131 (FVLAGLSGVVLFVAGLLGLIP) traverse the membrane as a helical segment. At 132–160 (VSWYNHFLGDRDVLPAPASPVTVQVSYSL) the chain is on the extracellular side. The chain crosses the membrane as a helical span at residues 161–181 (VLGYLGSCLLLLGGFSLALSF). Residues 182–292 (APWCDERCRR…DSSLPCDSDL (111 aa)) lie on the Cytoplasmic side of the membrane. Residues 222 to 292 (KYYSDGQHRP…DSSLPCDSDL (71 aa)) are disordered. Residues 273-282 (DAPSCSTHPC) show a composition bias toward polar residues.

The protein belongs to the claudin family. In terms of tissue distribution, expressed in germinal center B-cells, placenta, stomach as well as in colon tumor.

Its subcellular location is the cell junction. It is found in the tight junction. The protein localises to the cell membrane. Its function is as follows. Plays a major role in tight junction-specific obliteration of the intercellular space, through calcium-independent cell-adhesion activity. The sequence is that of Claudin-23 (CLDN23) from Homo sapiens (Human).